We begin with the raw amino-acid sequence, 228 residues long: uncharacterized protein (228 aa).

Residues 11–78 enclose the HTH gntR-type domain; it reads PPVNQQIYRI…PQRGSYVNKI (68 aa). The H-T-H motif DNA-binding region spans 38–57; the sequence is EKEVSVRFNVSRQPVREAFI.

This is an uncharacterized protein from Escherichia coli O6:H1 (strain CFT073 / ATCC 700928 / UPEC).